A 439-amino-acid polypeptide reads, in one-letter code: MGRPQRADKQRRETDGPQKSRPSLTQAQKNSTTIRIHSDDHDQGRPNTNGYARQEQHAWEDASLHSLDFRLCHSSNLEDDEMHGTATDDMIPVNFDFVSPQVPHAMSDLGMYDFGSEATASDLLDPEPCAQFISLASHSAADHVEKATAERPGNDGSSSPSSSLLRTSSSPSQQAVEKLSDLNVQIHRQLTTDHGSLDSAGRRTQLSCAVVSMIEGLKTFRELLFDILSTTSRSPLQAAFRDGQNNGTSRPNTAASQNMQQHRRSGSMLSLSDCDAVSLSNSNSDSRPFQEGSHHFGCLDMSTSLLLLSCYANLILLCREVFAAIRRALPISGHQSTLLELSGFRIGSVAVQEDSDLQITILIQVVVRLIDGIGHCLGYPYSSTTERGEASPSDRGISLELLDLVLGPKGRQGQPSHIGQIEALREDIRNLSKIVYKSI.

The span at 1–18 (MGRPQRADKQRRETDGPQ) shows a compositional bias: basic and acidic residues. 3 disordered regions span residues 1 to 53 (MGRP…GYAR), 143 to 177 (HVEK…QAVE), and 239 to 262 (AFRD…MQQH). Positions 20–35 (SRPSLTQAQKNSTTIR) are enriched in polar residues. Positions 143–153 (HVEKATAERPG) are enriched in basic and acidic residues. Residues 157–172 (SSSPSSSLLRTSSSPS) are compositionally biased toward low complexity. Positions 243-260 (GQNNGTSRPNTAASQNMQ) are enriched in polar residues.

It localises to the nucleus. Functionally, transcription factor; part of the gene cluster that mediates the biosynthesis of pyrrocidines, fungal natural products containing a macrocyclic para-cyclophane connected to a decahydrofluorene ring system that show potent antibiotic activities toward Gram-negative bacteria. In Acremonium sp, this protein is Transcription factor pydF.